The chain runs to 429 residues: Ribosomal RNA small subunit methyltransferase B (429 aa).

S-adenosyl-L-methionine is bound by residues 254–260 (CAAPGGK), aspartate 277, aspartate 303, and aspartate 322. Cysteine 375 acts as the Nucleophile in catalysis.

Belongs to the class I-like SAM-binding methyltransferase superfamily. RsmB/NOP family.

Its subcellular location is the cytoplasm. The enzyme catalyses cytidine(967) in 16S rRNA + S-adenosyl-L-methionine = 5-methylcytidine(967) in 16S rRNA + S-adenosyl-L-homocysteine + H(+). Functionally, specifically methylates the cytosine at position 967 (m5C967) of 16S rRNA. This chain is Ribosomal RNA small subunit methyltransferase B, found in Escherichia coli O6:H1 (strain CFT073 / ATCC 700928 / UPEC).